The following is a 448-amino-acid chain: tRNA-2-methylthio-N(6)-dimethylallyladenosine synthase (448 aa).

The region spanning 7 to 123 (RSFYIHTFGC…LPALIGDAEE (117 aa)) is the MTTase N-terminal domain. [4Fe-4S] cluster-binding residues include cysteine 16, cysteine 52, cysteine 86, cysteine 159, cysteine 163, and cysteine 166. Residues 145-375 (REVGVGAFVP…IDLQLSISAE (231 aa)) enclose the Radical SAM core domain. Residues 378-441 (QEAVGSVVDV…SATLTGVNQG (64 aa)) enclose the TRAM domain.

Belongs to the methylthiotransferase family. MiaB subfamily. In terms of assembly, monomer. The cofactor is [4Fe-4S] cluster.

It is found in the cytoplasm. The catalysed reaction is N(6)-dimethylallyladenosine(37) in tRNA + (sulfur carrier)-SH + AH2 + 2 S-adenosyl-L-methionine = 2-methylsulfanyl-N(6)-dimethylallyladenosine(37) in tRNA + (sulfur carrier)-H + 5'-deoxyadenosine + L-methionine + A + S-adenosyl-L-homocysteine + 2 H(+). Catalyzes the methylthiolation of N6-(dimethylallyl)adenosine (i(6)A), leading to the formation of 2-methylthio-N6-(dimethylallyl)adenosine (ms(2)i(6)A) at position 37 in tRNAs that read codons beginning with uridine. The sequence is that of tRNA-2-methylthio-N(6)-dimethylallyladenosine synthase from Chlorobium phaeovibrioides (strain DSM 265 / 1930) (Prosthecochloris vibrioformis (strain DSM 265)).